A 62-amino-acid chain; its full sequence is Large ribosomal subunit protein uL30 (62 aa).

Belongs to the universal ribosomal protein uL30 family. In terms of assembly, part of the 50S ribosomal subunit.

The chain is Large ribosomal subunit protein uL30 from Pseudoalteromonas atlantica (strain T6c / ATCC BAA-1087).